The chain runs to 117 residues: DNA-directed RNA polymerase subunit omega (117 aa).

The segment covering 96–105 has biased composition (basic and acidic residues); that stretch reads KEEAEEEAKQ. Residues 96 to 117 form a disordered region; it reads KEEAEEEAKQKNSRAAKAAAAE. Low complexity predominate over residues 108-117; sequence SRAAKAAAAE.

The protein belongs to the RNA polymerase subunit omega family. As to quaternary structure, the RNAP catalytic core consists of 2 alpha, 1 beta, 1 beta' and 1 omega subunit. When a sigma factor is associated with the core the holoenzyme is formed, which can initiate transcription.

The catalysed reaction is RNA(n) + a ribonucleoside 5'-triphosphate = RNA(n+1) + diphosphate. In terms of biological role, promotes RNA polymerase assembly. Latches the N- and C-terminal regions of the beta' subunit thereby facilitating its interaction with the beta and alpha subunits. This is DNA-directed RNA polymerase subunit omega (rpoZ) from Lactococcus lactis subsp. lactis (strain IL1403) (Streptococcus lactis).